The following is a 644-amino-acid chain: Exoribonuclease 2 (644 aa).

Positions 189–516 (REDLTALDFV…NHRLLKAVIK (328 aa)) constitute an RNB domain. Residues 561–643 (DTRFAAEIVD…ETRSIIARPV (83 aa)) form the S1 motif domain.

The protein belongs to the RNR ribonuclease family. RNase II subfamily.

The protein resides in the cytoplasm. The catalysed reaction is Exonucleolytic cleavage in the 3'- to 5'-direction to yield nucleoside 5'-phosphates.. Functionally, involved in mRNA degradation. Hydrolyzes single-stranded polyribonucleotides processively in the 3' to 5' direction. In Escherichia coli O139:H28 (strain E24377A / ETEC), this protein is Exoribonuclease 2.